The following is a 375-amino-acid chain: Dual-specificity RNA methyltransferase RlmN (375 aa).

The Proton acceptor role is filled by glutamate 94. The 240-residue stretch at glutamate 100 to aspartate 339 folds into the Radical SAM core domain. An intrachain disulfide couples cysteine 107 to cysteine 344. 3 residues coordinate [4Fe-4S] cluster: cysteine 114, cysteine 118, and cysteine 121. Residues glycine 168–glutamate 169, serine 200, serine 222–histidine 224, and asparagine 301 each bind S-adenosyl-L-methionine. The active-site S-methylcysteine intermediate is the cysteine 344.

Belongs to the radical SAM superfamily. RlmN family. [4Fe-4S] cluster is required as a cofactor.

The protein resides in the cytoplasm. The catalysed reaction is adenosine(2503) in 23S rRNA + 2 reduced [2Fe-2S]-[ferredoxin] + 2 S-adenosyl-L-methionine = 2-methyladenosine(2503) in 23S rRNA + 5'-deoxyadenosine + L-methionine + 2 oxidized [2Fe-2S]-[ferredoxin] + S-adenosyl-L-homocysteine. It carries out the reaction adenosine(37) in tRNA + 2 reduced [2Fe-2S]-[ferredoxin] + 2 S-adenosyl-L-methionine = 2-methyladenosine(37) in tRNA + 5'-deoxyadenosine + L-methionine + 2 oxidized [2Fe-2S]-[ferredoxin] + S-adenosyl-L-homocysteine. Functionally, specifically methylates position 2 of adenine 2503 in 23S rRNA and position 2 of adenine 37 in tRNAs. m2A2503 modification seems to play a crucial role in the proofreading step occurring at the peptidyl transferase center and thus would serve to optimize ribosomal fidelity. The sequence is that of Dual-specificity RNA methyltransferase RlmN from Vibrio parahaemolyticus serotype O3:K6 (strain RIMD 2210633).